Consider the following 241-residue polypeptide: Guanosine phosphorylase (241 aa).

The protein belongs to the PNP/UDP phosphorylase family.

It carries out the reaction guanosine + phosphate = alpha-D-ribose 1-phosphate + guanine. The catalysed reaction is a purine D-ribonucleoside + phosphate = a purine nucleobase + alpha-D-ribose 1-phosphate. It catalyses the reaction inosine + phosphate = alpha-D-ribose 1-phosphate + hypoxanthine. The enzyme catalyses adenosine + phosphate = alpha-D-ribose 1-phosphate + adenine. With respect to regulation, activity is higher at low KCl concentrations. Its function is as follows. Phosphorylase involved in the non-carboxylating pentose bisphosphate pathway, a nucleoside degradation pathway present in some halophilic archaea. Catalyzes the phosphorolytic cleavage of guanosine to guanine and ribose-1-phosphate (R1P). Exhibits the highest activity toward guanosine, but also shows lower activity against inosine and adenosine. The sequence is that of Guanosine phosphorylase from Halorubrum lacusprofundi (strain ATCC 49239 / DSM 5036 / JCM 8891 / ACAM 34).